We begin with the raw amino-acid sequence, 216 residues long: Adenylate kinase (216 aa).

Position 13 to 18 (13 to 18 (GAGKGT)) interacts with ATP. Residues 33–66 (TTGDALRANKDMDISDMDTEYDTPREYMEAGDLV) form an NMP region. AMP-binding positions include threonine 34, arginine 39, 64–66 (DLV), 89–92 (GYPR), and glutamine 96. The interval 125–162 (GRRVCDDCGTNYHVEFNQPEEDGVCDECGGDLIQRDDD) is LID. Residue arginine 126 participates in ATP binding. Zn(2+) is bound by residues cysteine 129, cysteine 132, cysteine 149, and cysteine 152. Residues arginine 159 and arginine 170 each coordinate AMP. Position 198 (glutamine 198) interacts with ATP.

It belongs to the adenylate kinase family. Monomer.

Its subcellular location is the cytoplasm. The catalysed reaction is AMP + ATP = 2 ADP. It functions in the pathway purine metabolism; AMP biosynthesis via salvage pathway; AMP from ADP: step 1/1. Its function is as follows. Catalyzes the reversible transfer of the terminal phosphate group between ATP and AMP. Plays an important role in cellular energy homeostasis and in adenine nucleotide metabolism. The chain is Adenylate kinase from Haloarcula marismortui (strain ATCC 43049 / DSM 3752 / JCM 8966 / VKM B-1809) (Halobacterium marismortui).